The following is a 442-amino-acid chain: Testican-1 (442 aa).

The signal sequence occupies residues 1–21; the sequence is MPAIAVLAAAAAAWCFLQVDS. Cystine bridges form between C89-C100, C94-C110, C139-C169, C142-C162, C151-C183, C316-C340, C351-C358, and C360-C379. In terms of domain architecture, Kazal-like spans 133–185; it reads PSNLVKCKPCPVAQSAMVCGSDGHTYTSKCKLEFHACSTGKSLNSLCDGPCPC. Residues 313 to 379 enclose the Thyroglobulin type-1 domain; the sequence is GLPCQNEMNR…GSRKQGTVSC (67 aa). Disordered stretches follow at residues 375–395 and 420–442; these read GTVSCEEEQETSGDFGSGGSV and TRAVREDDEDEDDDKEDEVGYIW. 2 O-linked (Xyl...) (glycosaminoglycan) serine glycosylation sites follow: S386 and S391. Residues 425-442 show a composition bias toward acidic residues; it reads EDDEDEDDDKEDEVGYIW.

Post-translationally, contains chondroitin sulfate and heparan sulfate O-linked oligosaccharides. As to expression, predominantly expressed in the postsynaptic area of pyramidal neurons.

Its subcellular location is the secreted. It is found in the extracellular space. The protein localises to the extracellular matrix. Functionally, may play a role in cell-cell and cell-matrix interactions. May contribute to various neuronal mechanisms in the central nervous system. The sequence is that of Testican-1 (Spock1) from Mus musculus (Mouse).